The following is a 307-amino-acid chain: uncharacterized protein (307 aa).

It to B.burgdorferi BB0340.

This is an uncharacterized protein from Treponema pallidum (strain Nichols).